A 92-amino-acid polypeptide reads, in one-letter code: Small ribosomal subunit protein uS19 (92 aa).

It belongs to the universal ribosomal protein uS19 family.

In terms of biological role, protein S19 forms a complex with S13 that binds strongly to the 16S ribosomal RNA. The chain is Small ribosomal subunit protein uS19 from Vibrio vulnificus (strain CMCP6).